The following is a 491-amino-acid chain: Putative ABC transporter ATP-binding protein TDE_0906 (491 aa).

2 ABC transporter domains span residues Ile-2 to Leu-241 and Leu-267 to Leu-491. Residues Gly-36 to Thr-43 and Gly-300 to Thr-307 each bind ATP.

This sequence belongs to the ABC transporter superfamily.

It localises to the cell inner membrane. Functionally, probably part of an ABC transporter complex. Responsible for energy coupling to the transport system. This chain is Putative ABC transporter ATP-binding protein TDE_0906, found in Treponema denticola (strain ATCC 35405 / DSM 14222 / CIP 103919 / JCM 8153 / KCTC 15104).